The following is a 369-amino-acid chain: Methylthioribose-1-phosphate isomerase (369 aa).

Substrate contacts are provided by residues 54–56, arginine 95, and glutamine 208; that span reads RGA. Aspartate 249 functions as the Proton donor in the catalytic mechanism. 259–260 contacts substrate; that stretch reads NK.

It belongs to the eIF-2B alpha/beta/delta subunits family. MtnA subfamily.

The enzyme catalyses 5-(methylsulfanyl)-alpha-D-ribose 1-phosphate = 5-(methylsulfanyl)-D-ribulose 1-phosphate. The protein operates within amino-acid biosynthesis; L-methionine biosynthesis via salvage pathway; L-methionine from S-methyl-5-thio-alpha-D-ribose 1-phosphate: step 1/6. Functionally, catalyzes the interconversion of methylthioribose-1-phosphate (MTR-1-P) into methylthioribulose-1-phosphate (MTRu-1-P). The protein is Methylthioribose-1-phosphate isomerase of Desulfosudis oleivorans (strain DSM 6200 / JCM 39069 / Hxd3) (Desulfococcus oleovorans).